Consider the following 178-residue polypeptide: Inorganic pyrophosphatase (178 aa).

Substrate contacts are provided by K30, R44, and Y56. 3 residues coordinate Mg(2+): D66, D71, and D103. Y140 serves as a coordination point for substrate.

Belongs to the PPase family. In terms of assembly, homohexamer. The cofactor is Mg(2+).

It is found in the cytoplasm. The catalysed reaction is diphosphate + H2O = 2 phosphate + H(+). In terms of biological role, catalyzes the hydrolysis of inorganic pyrophosphate (PPi) forming two phosphate ions. The sequence is that of Inorganic pyrophosphatase from Pyrococcus horikoshii (strain ATCC 700860 / DSM 12428 / JCM 9974 / NBRC 100139 / OT-3).